A 398-amino-acid polypeptide reads, in one-letter code: 1-deoxy-D-xylulose 5-phosphate reductoisomerase (398 aa).

7 residues coordinate NADPH: Thr-10, Gly-11, Ser-12, Ile-13, Gly-36, Asn-38, and Asn-124. Lys-125 serves as a coordination point for 1-deoxy-D-xylulose 5-phosphate. Residue Glu-126 participates in NADPH binding. A Mn(2+)-binding site is contributed by Asp-150. The 1-deoxy-D-xylulose 5-phosphate site is built by Ser-151, Glu-152, Ser-176, and His-199. Glu-152 contributes to the Mn(2+) binding site. Gly-205 is an NADPH binding site. 1-deoxy-D-xylulose 5-phosphate is bound by residues Ser-212, Asn-217, Lys-218, and Glu-221. A Mn(2+)-binding site is contributed by Glu-221.

Belongs to the DXR family. It depends on Mg(2+) as a cofactor. Mn(2+) serves as cofactor.

The enzyme catalyses 2-C-methyl-D-erythritol 4-phosphate + NADP(+) = 1-deoxy-D-xylulose 5-phosphate + NADPH + H(+). It participates in isoprenoid biosynthesis; isopentenyl diphosphate biosynthesis via DXP pathway; isopentenyl diphosphate from 1-deoxy-D-xylulose 5-phosphate: step 1/6. Catalyzes the NADPH-dependent rearrangement and reduction of 1-deoxy-D-xylulose-5-phosphate (DXP) to 2-C-methyl-D-erythritol 4-phosphate (MEP). The polypeptide is 1-deoxy-D-xylulose 5-phosphate reductoisomerase (Nostoc punctiforme (strain ATCC 29133 / PCC 73102)).